Consider the following 442-residue polypeptide: F-box/FBD/LRR-repeat protein At3g14710 (442 aa).

Positions Asp26 to Thr73 constitute an F-box domain. LRR repeat units follow at residues Asn126 to Pro147, Ser151 to Pro172, and Asn173 to Leu194. Residues Val370 to Ser414 enclose the FBD domain.

The protein is F-box/FBD/LRR-repeat protein At3g14710 of Arabidopsis thaliana (Mouse-ear cress).